A 388-amino-acid chain; its full sequence is 3-amino-5-hydroxybenzoate synthase (388 aa).

Position 188 is an N6-(pyridoxal phosphate)lysine (K188).

It belongs to the degT/dnrJ/eryC1 family. In terms of assembly, homodimer. Can interact with RifL. It depends on pyridoxal 5'-phosphate as a cofactor.

The catalysed reaction is 5-deoxy-5-amino-3-dehydroshikimate = 3-amino-5-hydroxybenzoate + H2O + H(+). The enzyme catalyses UDP-3-oxo-alpha-D-glucose + L-glutamine = UDP-alpha-D-kanosamine + 2-oxoglutaramate. It participates in antibiotic biosynthesis; rifamycin B biosynthesis. With respect to regulation, AHBA synthase activity is activated by 3-deoxy-D-arabinoheptulosonic acid 7-phosphate (DAHP), an intermediate in the shikimate pathway, and is irreversibly inhibited by gabaculine (5-amino-1,3-cyclohexadiene-1-carboxylate). In terms of biological role, catalyzes the dehydration and aromatization of 5-amino-5-deoxy-3-dehydroshikimate (aminoDHS) to 3-amino-5-hydroxybenzoate (AHBA), a compound that then serves as the starter unit for the assembly of a polyketide during the biosynthesis of rifamycin B and other ansamycin antibiotics. Cannot utilize 5-deoxy-5-amino-3-dehydroquinate (aminoDHQ), 5-deoxy-5-aminoshikimate (aminoSA), quinate, 3-dehydroquinate, or 3-dehydroshikimate (DHS) as substrate. In a complex with RifL, RifK may have a second function in the AHBA pathway, acting as a transaminase introducing the nitrogen into the first pathway intermediate, UDP-3-keto-D-glucose, to give UDP-kanosamine. Appears to use glutamine as the nitrogen donor; NH(4)(+) or asparagine are 30% less effective as nitrogen donors and neither glutamate nor aspartate show activity. The chain is 3-amino-5-hydroxybenzoate synthase (rifK) from Amycolatopsis mediterranei (strain S699) (Nocardia mediterranei).